The following is a 318-amino-acid chain: Pantothenate kinase (318 aa).

96–103 contacts ATP; the sequence is GSVAVGKS.

This sequence belongs to the prokaryotic pantothenate kinase family.

It is found in the cytoplasm. The enzyme catalyses (R)-pantothenate + ATP = (R)-4'-phosphopantothenate + ADP + H(+). It participates in cofactor biosynthesis; coenzyme A biosynthesis; CoA from (R)-pantothenate: step 1/5. The polypeptide is Pantothenate kinase (Coxiella burnetii (strain Dugway 5J108-111)).